A 286-amino-acid polypeptide reads, in one-letter code: MMKKGTIILVAPTAIFSAILLYLVIWNAVMSFMNWSLLNSKPTFVGLETYSIVIRTFQFTNSLLHSIELSVILVVIGNILGIFIAALLYFLNSNKARSTFLSIVIYPLSISMAVNGLIWLWLFNIHIGVDWLLVRIGLPQFPWLSSTSTMFPSLVLVSVWAYTGIAALFYLAGFMNIDKTIVEAARLDGTSAFKILYKILIPNSLNSFIIATALLFLFSFRIFDLPYVLSGGTTNIFLQTSELYMYYLFTVEYFSQATAVATMITLIATIIIIPYALTVIRRWIRR.

The next 6 membrane-spanning stretches (helical) occupy residues T6 to W26, V71 to L91, I103 to F123, L154 to F174, I199 to S219, and V260 to I280. Residues L63–Y275 enclose the ABC transmembrane type-1 domain.

This sequence belongs to the binding-protein-dependent transport system permease family. In terms of assembly, the complex is composed of two ATP-binding proteins (GlcV), two transmembrane proteins (GlcT and GlcU) and a solute-binding protein (GlcS).

The protein localises to the cell membrane. In terms of biological role, part of the ABC transporter complex GlcSTUV involved in glucose uptake. Responsible for the translocation of the substrate across the membrane. The polypeptide is Glucose import system permease protein GlcT (Saccharolobus solfataricus (strain ATCC 35092 / DSM 1617 / JCM 11322 / P2) (Sulfolobus solfataricus)).